The sequence spans 89 residues: Mu-like prophage FluMu DNA-binding protein Ner (89 aa).

The H-T-H motif DNA-binding region spans 57–76 (ERLVANAIGVPPEVIWAGRF).

Belongs to the ner transcriptional regulatory family.

Its function is as follows. Negative regulator of transcription starting from the Pe and Pc promoters of Mu. Also negatively regulates its own gene transcription. This chain is Mu-like prophage FluMu DNA-binding protein Ner (nlp), found in Haemophilus influenzae (strain ATCC 51907 / DSM 11121 / KW20 / Rd).